We begin with the raw amino-acid sequence, 354 residues long: Variable large protein 15/16 (354 aa).

Residues 1–18 form the signal peptide; that stretch reads MRKRISAIIMTLFMVLVS. Residue C19 is the site of N-palmitoyl cysteine attachment. C19 is lipidated: S-diacylglycerol cysteine. The segment at 333–354 is disordered; it reads EDKSVEATNTAEATTSGQQAKN. A compositionally biased stretch (polar residues) spans 338–354; the sequence is EATNTAEATTSGQQAKN.

Belongs to the variable large protein (Vlp) family. Delta subfamily.

The protein resides in the cell outer membrane. Its function is as follows. The Vlp and Vsp proteins are antigenically distinct proteins, only one vlp or vsp gene is transcriptionally active at any one time. Switching between these genes is a mechanism of host immune response evasion. The sequence is that of Variable large protein 15/16 from Borrelia hermsii.